A 146-amino-acid chain; its full sequence is Putative esterase DR_2321 (146 aa).

This sequence belongs to the thioesterase PaaI family.

The polypeptide is Putative esterase DR_2321 (Deinococcus radiodurans (strain ATCC 13939 / DSM 20539 / JCM 16871 / CCUG 27074 / LMG 4051 / NBRC 15346 / NCIMB 9279 / VKM B-1422 / R1)).